A 207-amino-acid polypeptide reads, in one-letter code: Sodium/potassium-transporting ATPase subunit beta-1-interacting protein 1 (207 aa).

The next 3 helical transmembrane spans lie at 2-22 (GKCS…VAAL), 35-55 (APIL…FGTV), and 62-82 (LILY…IICF). N-linked (GlcNAc...) asparagine glycosylation is present at Asn-100. A helical transmembrane segment spans residues 147-167 (ALSSALQIFLALFGFVFACYV).

It belongs to the NKAIN family. In terms of assembly, interacts with ATP1B1 C-terminus. Detected in the brain only and specifically in neurons. Expressed in multiple regions such as cerebral cortex, thalamus, hippocampus, olfactory bulb and brainstem as well as in cerebellum with high expression in granular cell layer.

The protein localises to the cell membrane. The chain is Sodium/potassium-transporting ATPase subunit beta-1-interacting protein 1 (Nkain1) from Mus musculus (Mouse).